A 361-amino-acid polypeptide reads, in one-letter code: Chorismate synthase (361 aa).

Arg-48 and Arg-54 together coordinate NADP(+). FMN contacts are provided by residues 131-133 (RSS), 243-244 (NA), Gly-287, 302-306 (KPTSS), and Arg-328.

Belongs to the chorismate synthase family. In terms of assembly, homotetramer. Requires FMNH2 as cofactor.

The enzyme catalyses 5-O-(1-carboxyvinyl)-3-phosphoshikimate = chorismate + phosphate. It participates in metabolic intermediate biosynthesis; chorismate biosynthesis; chorismate from D-erythrose 4-phosphate and phosphoenolpyruvate: step 7/7. In terms of biological role, catalyzes the anti-1,4-elimination of the C-3 phosphate and the C-6 proR hydrogen from 5-enolpyruvylshikimate-3-phosphate (EPSP) to yield chorismate, which is the branch point compound that serves as the starting substrate for the three terminal pathways of aromatic amino acid biosynthesis. This reaction introduces a second double bond into the aromatic ring system. In Rhodopseudomonas palustris (strain BisA53), this protein is Chorismate synthase.